Consider the following 853-residue polypeptide: Penicillin-binding protein 1A (853 aa).

Over 1 to 6 (MRIAKL) the chain is Cytoplasmic. Residues 7–27 (ILNTLLTLCILGLVAGGMLYF) traverse the membrane as a helical; Signal-anchor for type II membrane protein segment. The Periplasmic portion of the chain corresponds to 28–853 (HLKSELQQPM…TPATQPQELF (826 aa)). The tract at residues 37–205 (MQIYTADGKL…STMNPLYSLK (169 aa)) is transglycosylase. The active-site Proton donor; for transglycosylase activity is E75. Residues 387–681 (QRANGEWQLG…RVISGELAFL (295 aa)) are transpeptidase. S441 serves as the catalytic Acyl-ester intermediate; for transpeptidase activity. A disordered region spans residues 615-636 (NALKPTDDSTNGEELDQQPETV).

It in the N-terminal section; belongs to the glycosyltransferase 51 family. The protein in the C-terminal section; belongs to the transpeptidase family.

Its subcellular location is the cell inner membrane. The catalysed reaction is [GlcNAc-(1-&gt;4)-Mur2Ac(oyl-L-Ala-gamma-D-Glu-L-Lys-D-Ala-D-Ala)](n)-di-trans,octa-cis-undecaprenyl diphosphate + beta-D-GlcNAc-(1-&gt;4)-Mur2Ac(oyl-L-Ala-gamma-D-Glu-L-Lys-D-Ala-D-Ala)-di-trans,octa-cis-undecaprenyl diphosphate = [GlcNAc-(1-&gt;4)-Mur2Ac(oyl-L-Ala-gamma-D-Glu-L-Lys-D-Ala-D-Ala)](n+1)-di-trans,octa-cis-undecaprenyl diphosphate + di-trans,octa-cis-undecaprenyl diphosphate + H(+). It carries out the reaction Preferential cleavage: (Ac)2-L-Lys-D-Ala-|-D-Ala. Also transpeptidation of peptidyl-alanyl moieties that are N-acyl substituents of D-alanine.. It functions in the pathway cell wall biogenesis; peptidoglycan biosynthesis. Functionally, cell wall formation. Synthesis of cross-linked peptidoglycan from the lipid intermediates. The enzyme has a penicillin-insensitive transglycosylase N-terminal domain (formation of linear glycan strands) and a penicillin-sensitive transpeptidase C-terminal domain (cross-linking of the peptide subunits). This chain is Penicillin-binding protein 1A (mrcA), found in Haemophilus influenzae (strain ATCC 51907 / DSM 11121 / KW20 / Rd).